Here is a 507-residue protein sequence, read N- to C-terminus: Cobyric acid synthase (507 aa).

One can recognise a GATase cobBQ-type domain in the interval 249-451 (DIEIAVINLP…IHGIFENREF (203 aa)). The Nucleophile role is filled by Cys-330. The active site involves His-443.

Belongs to the CobB/CobQ family. CobQ subfamily.

It participates in cofactor biosynthesis; adenosylcobalamin biosynthesis. In terms of biological role, catalyzes amidations at positions B, D, E, and G on adenosylcobyrinic A,C-diamide. NH(2) groups are provided by glutamine, and one molecule of ATP is hydrogenolyzed for each amidation. This is Cobyric acid synthase from Thermoanaerobacter sp. (strain X514).